The following is a 179-amino-acid chain: Inosine/xanthosine triphosphatase (179 aa).

Substrate is bound by residues 8-13 (TTNPAK) and 68-69 (EA). E68 provides a ligand contact to Mg(2+).

It belongs to the YjjX NTPase family. As to quaternary structure, homodimer. Requires Mg(2+) as cofactor. It depends on Mn(2+) as a cofactor.

It catalyses the reaction XTP + H2O = XDP + phosphate + H(+). The enzyme catalyses ITP + H2O = IDP + phosphate + H(+). Functionally, phosphatase that hydrolyzes non-canonical purine nucleotides such as XTP and ITP to their respective diphosphate derivatives. Probably excludes non-canonical purines from DNA/RNA precursor pool, thus preventing their incorporation into DNA/RNA and avoiding chromosomal lesions. This is Inosine/xanthosine triphosphatase from Serratia proteamaculans (strain 568).